The sequence spans 224 residues: Propanediol dehydratase medium subunit (224 aa).

Residues 1-18 (MEINEKLLRQIIEDVLSE) are targets protein to the BMC.

Belongs to the diol/glycerol dehydratase medium subunit family. As to quaternary structure, the propanediol dehydratase enzyme is a heterotrimeric complex composed of a large (PduC), a medium (PduD) and a small (PduE) subunit. Adenosylcob(III)alamin is required as a cofactor.

The protein localises to the bacterial microcompartment. It catalyses the reaction propane-1,2-diol = propanal + H2O. The protein operates within polyol metabolism; 1,2-propanediol degradation. Part of the PduCDE complex that catalyzes the dehydration of 1,2-propanediol (1,2-PD) to propionaldehyde. This subunit is directly targeted to the bacterial microcompartment (BMC). Its function is as follows. Expression of a cosmid containing the full 21-gene pdu operon in E.coli allows E.coli to grow on 1,2-propanediol (1,2-PD) with the appearance of BMCs in its cytoplasm. Functionally, the 1,2-PD-specific bacterial microcompartment (BMC) concentrates low levels of 1,2-PD catabolic enzymes, concentrates volatile reaction intermediates thus enhancing pathway flux and keeps the level of toxic, mutagenic propionaldehyde low. This chain is Propanediol dehydratase medium subunit, found in Citrobacter freundii.